A 97-amino-acid polypeptide reads, in one-letter code: Small ribosomal subunit protein bS20 (97 aa).

This sequence belongs to the bacterial ribosomal protein bS20 family.

Its function is as follows. Binds directly to 16S ribosomal RNA. In Prochlorococcus marinus (strain MIT 9301), this protein is Small ribosomal subunit protein bS20.